The primary structure comprises 620 residues: Chaperone protein HscA homolog (620 aa).

The protein belongs to the heat shock protein 70 family.

Chaperone involved in the maturation of iron-sulfur cluster-containing proteins. Has a low intrinsic ATPase activity which is markedly stimulated by HscB. The protein is Chaperone protein HscA homolog of Shewanella oneidensis (strain ATCC 700550 / JCM 31522 / CIP 106686 / LMG 19005 / NCIMB 14063 / MR-1).